The sequence spans 184 residues: Trichothecene 15-O-acetyltransferase SAT16 (184 aa).

H154 provides a ligand contact to substrate.

This sequence belongs to the trichothecene O-acetyltransferase family.

The protein operates within mycotoxin biosynthesis. In terms of biological role, trichothecene 15-O-acetyltransferase; part of the satratoxin SC2 cluster involved in the biosynthesis of satratoxins, trichothecene mycotoxins that are associated with human food poisonings. Satratoxins are suggested to be made by products of multiple gene clusters (SC1, SC2 and SC3) that encode 21 proteins in all, including polyketide synthases, acetyltransferases, and other enzymes expected to modify the trichothecene skeleton. SC1 encodes 10 proteins, SAT1 to SAT10. The largest are SAT8, which encodes a putative polyketide synthase (PKS) with a conventional non-reducing architecture, and SAT10, a putative protein containing four ankyrin repeats and thus may be involved in protein scaffolding. The putative short-chain reductase SAT3 may assist the PKS in some capacity. SAT6 contains a secretory lipase domain and acts probably as a trichothecene esterase. SAT5 encodes a putative acetyltransferase, and so, with SAT6, may affect endogenous protection from toxicity. The probable transcription factor SAT9 may regulate the expression of the SC1 cluster. SC2 encodes proteins SAT11 to SAT16, the largest of which encodes the putative reducing PKS SAT13. SAT11 is a cytochrome P450 monooxygenase, while SAT14 and SAT16 are probable acetyltransferases. The SC2 cluster may be regulated by the transcription factor SAT15. SC3 is a small cluster that encodes 5 proteins, SAT17 to SAT21. SAT21 is a putative MFS-type transporter which may have a role in exporting secondary metabolites. The four other proteins putatively encoded in SC3 include the taurine hydroxylase-like protein SAT17, the O-methyltransferase SAT18, the acetyltransferase SAT19, and the Cys6-type zinc finger SAT20, the latter being probably involved in regulation of SC3 expression. The chain is Trichothecene 15-O-acetyltransferase SAT16 from Stachybotrys chartarum (strain CBS 109288 / IBT 7711) (Toxic black mold).